The primary structure comprises 159 residues: Histone H2A (159 aa).

The span at 1–10 shows a compositional bias: gly residues; the sequence is MDSTGTGAGG. Disordered stretches follow at residues 1–31 and 133–159; these read MDST…SVSR and KTAE…PKKA. 2 stretches are compositionally biased toward basic residues: residues 11-29 and 149-159; these read KGKK…KKSV and PKKAAKSPKKA. Short sequence motifs (SPKK motif) lie at residues 148 to 151 and 155 to 158; these read SPKK.

The protein belongs to the histone H2A family. In terms of assembly, the nucleosome is a histone octamer containing two molecules each of H2A, H2B, H3 and H4 assembled in one H3-H4 heterotetramer and two H2A-H2B heterodimers. The octamer wraps approximately 147 bp of DNA.

The protein localises to the nucleus. It localises to the chromosome. Its function is as follows. Core component of nucleosome. Nucleosomes wrap and compact DNA into chromatin, limiting DNA accessibility to the cellular machineries which require DNA as a template. Histones thereby play a central role in transcription regulation, DNA repair, DNA replication and chromosomal stability. DNA accessibility is regulated via a complex set of post-translational modifications of histones, also called histone code, and nucleosome remodeling. This Zea mays (Maize) protein is Histone H2A.